The primary structure comprises 304 residues: HTH-type transcriptional activator CmpR (304 aa).

The 61-residue stretch at 1-61 (MKNATLHQFE…EQIGRKIYLT (61 aa)) folds into the HTH lysR-type domain. Positions 21-40 (FTKAAEELFLTQPTVSQQMK) form a DNA-binding region, H-T-H motif.

The protein belongs to the LysR transcriptional regulatory family.

The protein resides in the cytoplasm. Its function is as follows. Activates transcription of the cmpABCD operon under carbon dioxide-limited conditions. Specifically binds to the cmpR-cmpA intergenic region. This is HTH-type transcriptional activator CmpR (cmpR) from Synechocystis sp. (strain ATCC 27184 / PCC 6803 / Kazusa).